Consider the following 293-residue polypeptide: Adenylyl-sulfate kinase 2, chloroplastic (293 aa).

The transit peptide at 1 to 59 (MEGLAIRASRPSVFCSIPGLGGDSHRKPPSDGFLKLPASSIPADSRKLVANSTSFHPIS) directs the protein to the chloroplast. 122-130 (GLSGSGKST) is an ATP binding site. Substrate is bound by residues D152, R155, R169, N172, 195 to 196 (IS), and G245. Residue S196 is the Phosphoserine intermediate of the active site.

Belongs to the APS kinase family. As to quaternary structure, interacts with APK1. Expressed in root vasculature, root tips, leaf epidermal cells and funiculus of developing seeds.

The protein localises to the plastid. It is found in the chloroplast. It catalyses the reaction adenosine 5'-phosphosulfate + ATP = 3'-phosphoadenylyl sulfate + ADP + H(+). Its pathway is sulfur metabolism; hydrogen sulfide biosynthesis; sulfite from sulfate: step 2/3. Its function is as follows. Catalyzes the synthesis of activated sulfate. Essential for plant reproduction and viability. Required for the production of glucosinolates. This Arabidopsis thaliana (Mouse-ear cress) protein is Adenylyl-sulfate kinase 2, chloroplastic (APK2).